A 473-amino-acid polypeptide reads, in one-letter code: UDP-N-acetylmuramate--L-alanine ligase (473 aa).

123–129 (GSHGKTS) serves as a coordination point for ATP.

Belongs to the MurCDEF family.

The protein resides in the cytoplasm. It carries out the reaction UDP-N-acetyl-alpha-D-muramate + L-alanine + ATP = UDP-N-acetyl-alpha-D-muramoyl-L-alanine + ADP + phosphate + H(+). It functions in the pathway cell wall biogenesis; peptidoglycan biosynthesis. Its function is as follows. Cell wall formation. The protein is UDP-N-acetylmuramate--L-alanine ligase of Prochlorococcus marinus subsp. pastoris (strain CCMP1986 / NIES-2087 / MED4).